A 467-amino-acid chain; its full sequence is Amino-acid permease RocE (467 aa).

The next 12 helical transmembrane spans lie at 21 to 41 (FMIS…GFTI), 47 to 67 (LGAV…MLCL), 87 to 107 (FISP…WAVT), 122 to 142 (WFPH…MFIL), 162 to 182 (ILII…LIDL), 207 to 227 (MLIT…IGVA), 246 to 266 (VWRT…MIPW), 283 to 303 (IGIP…LLSV), 336 to 356 (VPMY…LTKF), 361 to 381 (TVYM…WITI), 409 to 429 (YPVL…SLAF), and 435 to 455 (IALY…HVVI).

Belongs to the amino acid-polyamine-organocation (APC) superfamily. Amino acid transporter (AAT) (TC 2.A.3.1) family.

The protein resides in the cell membrane. Putative transport protein involved in arginine degradative pathway. Probably transports arginine or ornithine. This chain is Amino-acid permease RocE, found in Bacillus subtilis (strain 168).